A 285-amino-acid polypeptide reads, in one-letter code: Transcription initiation factor IIE subunit beta (285 aa).

Composition is skewed to polar residues over residues Met1–Ser10 and Thr33–His44. The tract at residues Met1–Leu56 is disordered. The span at Ser45–Ser55 shows a compositional bias: low complexity. The segment at residues Tyr67–Arg142 is a DNA-binding region (TFIIE beta). Residues Pro240–Thr272 are disordered. Basic residues predominate over residues Lys258–Lys268.

Belongs to the TFIIE beta subunit family. TFIIE is a tetramer of two alpha (tfa1) and two beta (tfa2) subunits. TFIIE associates with RNA polymerase II via the beta subunit.

It is found in the nucleus. In terms of biological role, recruits TFIIH to the initiation complex and stimulates the RNA polymerase II C-terminal domain kinase and DNA-dependent ATPase activities of TFIIH. Both TFIIH and TFIIE are required for promoter clearance by RNA polymerase. The sequence is that of Transcription initiation factor IIE subunit beta (tfa2) from Schizosaccharomyces pombe (strain 972 / ATCC 24843) (Fission yeast).